We begin with the raw amino-acid sequence, 228 residues long: Heat shock 70-related protein 4 (228 aa).

Positions 57–80 (RWHEPPGNTVFDEAHDRPQVRRPD) are disordered. Basic and acidic residues predominate over residues 68-80 (DEAHDRPQVRRPD).

The protein belongs to the heat shock protein 70 family.

The chain is Heat shock 70-related protein 4 (HSP70.4) from Leishmania major.